The chain runs to 465 residues: Poly(A) polymerase I (465 aa).

Catalysis depends on residues Asp80, Asp82, and Asp162. The segment at 429–465 (SAPPDQKGMLNELDEEPSPRRRTRRPRKRAPRREGTA) is disordered. Residues 448–459 (RRRTRRPRKRAP) are compositionally biased toward basic residues.

It belongs to the tRNA nucleotidyltransferase/poly(A) polymerase family.

It carries out the reaction RNA(n) + ATP = RNA(n)-3'-adenine ribonucleotide + diphosphate. Its function is as follows. Adds poly(A) tail to the 3' end of many RNAs, which usually targets these RNAs for decay. Plays a significant role in the global control of gene expression, through influencing the rate of transcript degradation, and in the general RNA quality control. The polypeptide is Poly(A) polymerase I (Escherichia coli O157:H7).